Consider the following 134-residue polypeptide: 6,7-dimethyl-8-ribityllumazine synthase (134 aa).

Residues F11, 43–45 (AYD), and 67–69 (AIV) each bind 5-amino-6-(D-ribitylamino)uracil. Residue 72–73 (DT) participates in (2S)-2-hydroxy-3-oxobutyl phosphate binding. The active-site Proton donor is the H75. F100 is a binding site for 5-amino-6-(D-ribitylamino)uracil. (2S)-2-hydroxy-3-oxobutyl phosphate is bound at residue R115.

It belongs to the DMRL synthase family.

It carries out the reaction (2S)-2-hydroxy-3-oxobutyl phosphate + 5-amino-6-(D-ribitylamino)uracil = 6,7-dimethyl-8-(1-D-ribityl)lumazine + phosphate + 2 H2O + H(+). It functions in the pathway cofactor biosynthesis; riboflavin biosynthesis; riboflavin from 2-hydroxy-3-oxobutyl phosphate and 5-amino-6-(D-ribitylamino)uracil: step 1/2. Its function is as follows. Catalyzes the formation of 6,7-dimethyl-8-ribityllumazine by condensation of 5-amino-6-(D-ribitylamino)uracil with 3,4-dihydroxy-2-butanone 4-phosphate. This is the penultimate step in the biosynthesis of riboflavin. This is 6,7-dimethyl-8-ribityllumazine synthase from Halorubrum lacusprofundi (strain ATCC 49239 / DSM 5036 / JCM 8891 / ACAM 34).